Reading from the N-terminus, the 181-residue chain is Ribosome-recycling factor (181 aa).

Residues 131–154 are disordered; that stretch reads RRDAMDSVKKEKEMPEDDVRKAEN.

It belongs to the RRF family.

It localises to the cytoplasm. In terms of biological role, responsible for the release of ribosomes from messenger RNA at the termination of protein biosynthesis. May increase the efficiency of translation by recycling ribosomes from one round of translation to another. The chain is Ribosome-recycling factor from Leuconostoc citreum (strain KM20).